We begin with the raw amino-acid sequence, 89 residues long: Small ribosomal subunit protein uS17 (89 aa).

Belongs to the universal ribosomal protein uS17 family. In terms of assembly, part of the 30S ribosomal subunit.

Functionally, one of the primary rRNA binding proteins, it binds specifically to the 5'-end of 16S ribosomal RNA. This is Small ribosomal subunit protein uS17 from Ralstonia pickettii (strain 12J).